A 327-amino-acid polypeptide reads, in one-letter code: MHTFKDSLNITVSSGSGGAGCVSFLRERFKAKGGPDGGDGGRGGNVVFKVKPDLKTLSFYKNGQKLAANNGKPGMGSRKSGASGEDLVIFVPPNTRVYDVFTDSMLFELQNFDDEVIALKGGRGGLGNVNFKSSTKRTPRFAQPGESGTTLDLRLELVLIADIGLVGLPNAGKSSLISTITASRSKVGNYPFTTKVPHLGVLKSSYEDLVIADVPGIIEGASRGMGLGFEFLRHISKTKILVFLIDVASNDFMSTYSILVNELSVYDVGLSSKKRIIVANKLDLEGAIENFNQLKRALDGEKVLGISIYDNRGIDELVNELFALSRI.

Residues 2-160 (HTFKDSLNIT…LDLRLELVLI (159 aa)) form the Obg domain. The 166-residue stretch at 161–326 (ADIGLVGLPN…LVNELFALSR (166 aa)) folds into the OBG-type G domain. Residues 167 to 174 (GLPNAGKS), 192 to 196 (FTTKV), 213 to 216 (DVPG), 280 to 283 (NKLD), and 307 to 309 (SIY) contribute to the GTP site. Residues Ser174 and Thr194 each coordinate Mg(2+).

The protein belongs to the TRAFAC class OBG-HflX-like GTPase superfamily. OBG GTPase family. In terms of assembly, monomer. The cofactor is Mg(2+).

It localises to the cytoplasm. Its function is as follows. An essential GTPase which binds GTP, GDP and possibly (p)ppGpp with moderate affinity, with high nucleotide exchange rates and a fairly low GTP hydrolysis rate. Plays a role in control of the cell cycle, stress response, ribosome biogenesis and in those bacteria that undergo differentiation, in morphogenesis control. This is GTPase Obg from Borrelia turicatae (strain 91E135).